Here is an 862-residue protein sequence, read N- to C-terminus: Ecdysone-induced protein 78C (862 aa).

Disordered stretches follow at residues 28–83 (SSEQ…EEAL), 97–138 (LHFF…KQHH), 173–210 (ASLS…LNCT), and 230–353 (ASNH…NNNN). Positions 37 to 46 (KQEDLIKDFT) are enriched in basic and acidic residues. The span at 47–82 (RDEEEQPSEEEAEEEDNEEDEEEEGEEEEEDEDEEA) shows a compositional bias: acidic residues. Residues 105–119 (DSSTQGAYSEANSLE) show a composition bias toward polar residues. Composition is skewed to low complexity over residues 173-206 (ASLS…QQHQ), 230-291 (ASNH…NNSV), 308-335 (QQQQ…QQQQ), and 342-353 (SSSSNGSSNNNN). Residues 360 to 435 (FVPCKVCGDK…AGMSRDSVRY (76 aa)) constitute a DNA-binding region (nuclear receptor). 2 NR C4-type zinc fingers span residues 363-383 (CKVC…CEGC) and 399-418 (CLRD…CQYC). A disordered region spans residues 444–557 (ELNGAAASSA…NNNSSSGNAS (114 aa)). Residues 447–460 (GAAASSAAAGAPAS) show a composition bias toward low complexity. Over residues 463–472 (VDDSTSSTLH) the composition is skewed to polar residues. A compositionally biased stretch (low complexity) spans 475-508 (HLQQQQQQHLLQQQQQQQHQPQLQQHHQLQQQPH). A compositionally biased stretch (polar residues) spans 516–533 (TPSTPQTPQMCSIASSPS). Over residues 539 to 555 (NSANNNNNNNNNSSSGN) the composition is skewed to low complexity. Residues 626 to 855 (YTEELTRELM…PPLFAEIFDI (230 aa)) enclose the NR LBD domain.

It belongs to the nuclear hormone receptor family. NR1 subfamily.

The protein resides in the nucleus. In terms of biological role, induces the early late puff 78C which triggers puparium formation and development. In Drosophila melanogaster (Fruit fly), this protein is Ecdysone-induced protein 78C (Eip78C).